The sequence spans 301 residues: Tyrosine recombinase XerC (301 aa).

Positions 1 to 85 (MELISLFKQY…ALRSFYRFLV (85 aa)) constitute a Core-binding (CB) domain. Positions 106–292 (KLPHFFYEKE…TKEKLQESYR (187 aa)) constitute a Tyr recombinase domain. Active-site residues include arginine 147, lysine 171, histidine 244, arginine 247, and histidine 270. Tyrosine 279 (O-(3'-phospho-DNA)-tyrosine intermediate) is an active-site residue.

It belongs to the 'phage' integrase family. XerC subfamily. Forms a cyclic heterotetrameric complex composed of two molecules of XerC and two molecules of XerD.

It localises to the cytoplasm. Functionally, site-specific tyrosine recombinase, which acts by catalyzing the cutting and rejoining of the recombining DNA molecules. The XerC-XerD complex is essential to convert dimers of the bacterial chromosome into monomers to permit their segregation at cell division. It also contributes to the segregational stability of plasmids. This is Tyrosine recombinase XerC from Pediococcus pentosaceus (strain ATCC 25745 / CCUG 21536 / LMG 10740 / 183-1w).